A 96-amino-acid chain; its full sequence is Pore-forming peptide amoebapore B (96 aa).

The first 19 residues, 1-19 (MRAIIFVLIFAIAFAATRE), serve as a signal peptide directing secretion. Residues 20–96 (GAILCNLCKD…VVVCEKIHAC (77 aa)) enclose the Saposin B-type domain. Intrachain disulfides connect C24-C96, C27-C90, and C54-C65.

In terms of assembly, monomer. Homodimer. Hexamer; formed during insertion in the membrane.

It is found in the cytoplasmic granule. Its function is as follows. Forms pores in the cell membrane of host cells. Has antibacterial activity against M.luteus, no activity against E.coli. Implicated in the cytolytic activity of the parasite. This is Pore-forming peptide amoebapore B from Entamoeba histolytica (strain ATCC 30459 / HM-1:IMSS / ABRM).